Here is a 410-residue protein sequence, read N- to C-terminus: Angiopoietin-related protein 4 (410 aa).

Residues 1–23 (MRCAPTAGAALMLCAATAGLLSA) form the signal peptide. Residues 81-106 (KDPEGSAAPPRAQANLVNPGGGDASP) form a disordered region. Positions 107–155 (ETLRSLKTQLEAQNSRIQQLFQKVAQQQRHLEKQQLRIQNLQSQMDHLA) form a coiled coil. N-linked (GlcNAc...) asparagine glycosylation is present at Asn-184. A Fibrinogen C-terminal domain is found at 186 to 408 (SRLHRLPRDC…ATTILVQPTA (223 aa)). Cystine bridges form between Cys-195–Cys-223 and Cys-348–Cys-361.

In terms of assembly, homooligomer; disulfide-linked via Cys residues in the N-terminal part of the protein. The homooligomer undergoes proteolytic processing to release the ANGPTL4 C-terminal chain, which circulates as a monomer. The homooligomer unprocessed form is able to interact with the extracellular matrix. In terms of processing, N-glycosylated. Post-translationally, forms disulfide-linked dimers and tetramers. Cleaved into a smaller N-terminal chain and a larger chain that contains the fibrinogen C-terminal domain; both cleaved and uncleaved forms are detected in the extracellular space. The cleaved form is not present within the cell.

The protein resides in the secreted. Its subcellular location is the extracellular space. The protein localises to the extracellular matrix. Its function is as follows. Mediates inactivation of the lipoprotein lipase LPL, and thereby plays a role in the regulation of triglyceride clearance from the blood serum and in lipid metabolism. May also play a role in regulating glucose homeostasis and insulin sensitivity. Inhibits proliferation, migration, and tubule formation of endothelial cells and reduces vascular leakage. Upon heterologous expression, inhibits the adhesion of endothelial cell to the extracellular matrix (ECM), and inhibits the reorganization of the actin cytoskeleton, formation of actin stress fibers and focal adhesions in endothelial cells that have adhered to ANGPTL4-containing ECM (in vitro). Depending on context, may modulate tumor-related angiogenesis. Functionally, mediates inactivation of the lipoprotein lipase LPL, and thereby plays an important role in the regulation of triglyceride clearance from the blood serum and in lipid metabolism. Has higher activity in LPL inactivation than the uncleaved protein. The protein is Angiopoietin-related protein 4 (ANGPTL4) of Bos taurus (Bovine).